The sequence spans 36 residues: Mu-agatoxin-Aa1a (36 aa).

Intrachain disulfides connect C2-C17, C9-C22, C16-C32, and C24-C30. The residue at position 36 (N36) is an Asparagine amide.

This sequence belongs to the neurotoxin 07 (Beta/delta-agtx) family. 04 (aga-5) subfamily. As to expression, expressed by the venom gland.

Its subcellular location is the secreted. Its function is as follows. Insecticidal neurotoxin that induces an irreversible spastic paralysis when injected into insects. Modifies presynaptic voltage-gated sodium channels (Nav), causing them to open at the normal resting potential of the nerve. This leads to spontaneous release of neurotransmitter and repetitive action potentials in motor neurons. This chain is Mu-agatoxin-Aa1a, found in Agelenopsis aperta (North American funnel-web spider).